Consider the following 256-residue polypeptide: Sugar fermentation stimulation protein homolog (256 aa).

This sequence belongs to the SfsA family.

The protein is Sugar fermentation stimulation protein homolog of Prochlorococcus marinus (strain MIT 9211).